A 336-amino-acid polypeptide reads, in one-letter code: 4-hydroxythreonine-4-phosphate dehydrogenase (336 aa).

T140 contacts substrate. A divalent metal cation contacts are provided by H171, H216, and H271. Substrate contacts are provided by K279, N288, and R297.

This sequence belongs to the PdxA family. As to quaternary structure, homodimer. Zn(2+) serves as cofactor. The cofactor is Mg(2+). Requires Co(2+) as cofactor.

Its subcellular location is the cytoplasm. It catalyses the reaction 4-(phosphooxy)-L-threonine + NAD(+) = 3-amino-2-oxopropyl phosphate + CO2 + NADH. The protein operates within cofactor biosynthesis; pyridoxine 5'-phosphate biosynthesis; pyridoxine 5'-phosphate from D-erythrose 4-phosphate: step 4/5. Catalyzes the NAD(P)-dependent oxidation of 4-(phosphooxy)-L-threonine (HTP) into 2-amino-3-oxo-4-(phosphooxy)butyric acid which spontaneously decarboxylates to form 3-amino-2-oxopropyl phosphate (AHAP). In Erythrobacter litoralis (strain HTCC2594), this protein is 4-hydroxythreonine-4-phosphate dehydrogenase.